The following is a 326-amino-acid chain: Cytosolic Fe-S cluster assembly factor NBP35 (326 aa).

Positions 1 to 38 (MTEIANGQQILPPDYTLKEPEPEHCPGPESENAGKGDS) are disordered. The segment covering 16 to 26 (TLKEPEPEHCP) has biased composition (basic and acidic residues). [4Fe-4S] cluster is bound by residues C25, C39, C42, and C48. 78-85 (GKGGVGKS) is a binding site for ATP. C251 and C254 together coordinate [4Fe-4S] cluster.

It belongs to the Mrp/NBP35 ATP-binding proteins family. NUBP1/NBP35 subfamily. Heterotetramer of 2 NBP35 and 2 CFD1 chains. The cofactor is [4Fe-4S] cluster.

It is found in the cytoplasm. It localises to the nucleus. In terms of biological role, component of the cytosolic iron-sulfur (Fe/S) protein assembly (CIA) machinery. Required for maturation of extramitochondrial Fe-S proteins. The NBP35-CFD1 heterotetramer forms a Fe-S scaffold complex, mediating the de novo assembly of an Fe-S cluster and its transfer to target apoproteins. Required for biogenesis and export of both ribosomal subunits, which may reflect a role in assembly of the Fe/S clusters in RLI1, a protein which performs rRNA processing and ribosome export. This is Cytosolic Fe-S cluster assembly factor NBP35 from Kluyveromyces lactis (strain ATCC 8585 / CBS 2359 / DSM 70799 / NBRC 1267 / NRRL Y-1140 / WM37) (Yeast).